The chain runs to 202 residues: Urease accessory protein UreG (202 aa).

11 to 18 (GPVGSGKT) is a binding site for GTP.

Belongs to the SIMIBI class G3E GTPase family. UreG subfamily. Homodimer. UreD, UreF and UreG form a complex that acts as a GTP-hydrolysis-dependent molecular chaperone, activating the urease apoprotein by helping to assemble the nickel containing metallocenter of UreC. The UreE protein probably delivers the nickel.

It localises to the cytoplasm. Functionally, facilitates the functional incorporation of the urease nickel metallocenter. This process requires GTP hydrolysis, probably effectuated by UreG. The chain is Urease accessory protein UreG from Prochlorococcus marinus (strain MIT 9313).